The chain runs to 557 residues: MTESFAQLFEESLKEIETRPGSIVRGVVVAIDKDVVLVDAGLKSESAIPVEQFKNAQGEIEIQVGDEVDVALDAVEDGFGETLLSREKAKRHEAWLMLEKAYEESATVTGVINGKVKGGFTVELNGIRAFLPGSLVDVRPVRDTLHLEGKELEFKVIKLDQKRNNVVVSRRAVIESENSAERDQLLENLQEGMEVKGIVKNLTDYGAFVDLGGVDGLLHITDMAWKRVKHPSEIVNVGDEITVKVLKFDRERTRVSLGLKQLGEDPWVAIAKRYPEGTKLTGRVTNLTDYGCFVEIEEGVEGLVHVSEMDWTNKNIHPSKVVNVGDVVEVMVLDIDEERRRISLGLKQCKANPWQQFAETHNKGDRVEGKIKSITDFGIFIGLDGGIDGLVHLSDISWNVAGEEAVREYKKGDEIAAVVLQVDAERERISLGVKQLAEDPFNNYLSVNKKGAIVTGKVTAVDAKGATVELADGVEGYLRASEASRDRIEDATLVMSVGDEIEAKYTGVDRKNRVVSLSIRAKDEADEKDAIASVNNKQEEGNFSNAMAEAFKAAKGE.

6 consecutive S1 motif domains span residues 21 to 87 (GSIV…LSRE), 105 to 171 (SATV…VSRR), 192 to 260 (GMEV…LGLK), 277 to 347 (GTKL…LGLK), 364 to 434 (GDRV…LGVK), and 451 to 520 (GAIV…LSIR).

It belongs to the bacterial ribosomal protein bS1 family.

In terms of biological role, binds mRNA; thus facilitating recognition of the initiation point. It is needed to translate mRNA with a short Shine-Dalgarno (SD) purine-rich sequence. This Dickeya dadantii (strain 3937) (Erwinia chrysanthemi (strain 3937)) protein is Small ribosomal subunit protein bS1 (rpsA).